We begin with the raw amino-acid sequence, 48 residues long: Large ribosomal subunit protein bL32 (48 aa).

A disordered region spans residues 24–48; that stretch reads LPMPIKDKDGSYKMPHRVNPVTKEY.

The protein belongs to the bacterial ribosomal protein bL32 family.

The chain is Large ribosomal subunit protein bL32 from Campylobacter lari (strain RM2100 / D67 / ATCC BAA-1060).